The sequence spans 1299 residues: Probable membrane antigen 75 (1299 aa).

The protein localises to the virion tegument. This Saimiriine herpesvirus 2 (strain 11) (SaHV-2) protein is Probable membrane antigen 75 (75).